A 572-amino-acid polypeptide reads, in one-letter code: Proline--tRNA ligase (572 aa).

The protein belongs to the class-II aminoacyl-tRNA synthetase family. ProS type 1 subfamily. Homodimer.

It is found in the cytoplasm. It carries out the reaction tRNA(Pro) + L-proline + ATP = L-prolyl-tRNA(Pro) + AMP + diphosphate. Its function is as follows. Catalyzes the attachment of proline to tRNA(Pro) in a two-step reaction: proline is first activated by ATP to form Pro-AMP and then transferred to the acceptor end of tRNA(Pro). As ProRS can inadvertently accommodate and process non-cognate amino acids such as alanine and cysteine, to avoid such errors it has two additional distinct editing activities against alanine. One activity is designated as 'pretransfer' editing and involves the tRNA(Pro)-independent hydrolysis of activated Ala-AMP. The other activity is designated 'posttransfer' editing and involves deacylation of mischarged Ala-tRNA(Pro). The misacylated Cys-tRNA(Pro) is not edited by ProRS. The chain is Proline--tRNA ligase from Haemophilus influenzae (strain PittGG).